We begin with the raw amino-acid sequence, 325 residues long: D-xylose 1-dehydrogenase (NADP(+)) 2 (325 aa).

An N-terminal signal peptide occupies residues 1-22 (MMFGILGTAGIGVKSVIPAVQA).

This sequence belongs to the Gfo/Idh/MocA family. Homotetramer.

The protein resides in the secreted. The enzyme catalyses D-xylose + NADP(+) = D-xylono-1,5-lactone + NADPH + H(+). Its function is as follows. NADP-dependent D-xylose dehydrogenase involved in the degradation of D-xylose, a major component of hemicelluloses such as xylan. Even if it shows D-xylose dehydrogenase activity, it is not essential for D-xylose degradation. This chain is D-xylose 1-dehydrogenase (NADP(+)) 2, found in Haloferax volcanii (strain ATCC 29605 / DSM 3757 / JCM 8879 / NBRC 14742 / NCIMB 2012 / VKM B-1768 / DS2) (Halobacterium volcanii).